A 367-amino-acid polypeptide reads, in one-letter code: Pantothenate kinase CAB1 (367 aa).

It belongs to the type II pantothenate kinase family.

It localises to the cytoplasm. It is found in the nucleus. It catalyses the reaction (R)-pantothenate + ATP = (R)-4'-phosphopantothenate + ADP + H(+). It functions in the pathway cofactor biosynthesis; coenzyme A biosynthesis; CoA from (R)-pantothenate: step 1/5. Regulated by feedback inhibition by malonyl-CoA. Functionally, plays a role in the physiological regulation of the intracellular CoA concentration. The chain is Pantothenate kinase CAB1 (CAB1) from Saccharomyces cerevisiae (strain ATCC 204508 / S288c) (Baker's yeast).